Here is a 2201-residue protein sequence, read N- to C-terminus: RNA-directed RNA polymerase L (2201 aa).

Residues 26–285 (KNIMLAQTQI…VCSKSVEYTF (260 aa)) are endonuclease. Mn(2+)-binding residues include E51, D88, and E101. K114 is an active-site residue. The region spanning 1156-1352 (LDMKSVVRQS…FLSDRLNKFV (197 aa)) is the RdRp catalytic domain. D1312 lines the Mg(2+) pocket.

It belongs to the Bunyavirales RNA polymerase family. As to quaternary structure, homomultimer; the oligomeric structure is essential for the polymerase activity. Interacts with nucleoprotein N. Interacts with protein Z; this interaction inhibits viral transcription and replication, Z partially blocks the product exit tunnel for the releasing nascent RNA product. Mn(2+) serves as cofactor. It depends on Mg(2+) as a cofactor.

The protein resides in the virion. It is found in the host cytoplasm. It catalyses the reaction RNA(n) + a ribonucleoside 5'-triphosphate = RNA(n+1) + diphosphate. In terms of biological role, RNA-dependent RNA polymerase, which is responsible for the replication and transcription of the viral RNA genome using antigenomic RNA as an intermediate. During transcription, synthesizes subgenomic RNAs and assures their capping by a cap-snatching mechanism, which involves the endonuclease activity cleaving the host capped pre-mRNAs. These short capped RNAs are then used as primers for viral transcription. The 3'-end of subgenomic mRNAs molecules are heterogeneous and not polyadenylated. The replicase function is to direct synthesis of antigenomic and genomic RNA which are encapsidated and non capped. As a consequence of the use of the same enzyme for both transcription and replication, these mechanisms need to be well coordinated. These processes may be regulated by proteins N and Z in a dose-dependent manner. Z protein inhibits the viral polymerase L und thus the viral transcription and RNA synthesis. In Oecomys bicolor (Bicolored arboreal rice rat), this protein is RNA-directed RNA polymerase L.